Consider the following 302-residue polypeptide: MSTKFNVKTFQGMILALQEYWANQGCTIVQPFDMEVGAGTSHPMTALRALGPEPMAFAYVQPSRRPTDGRYGENPNRLQHYYQFQVVIKPSPDNIQELYLGSLEMLGFDPTQNDIRFVEDNWENPTLGAWGLGWEVWLNGMEVTQFTYFQQVGGLECKPVTGEVTYGLERLAMYIQGVDSVYDLVWSDGPLGKTTYGDVFHQNEVEQSTYNFEHANTDFLFYCFDQYEKEAQELLALEKPLPLPAYERILKAAHSFNLLDARKAISVTERQRYILRIRALTKGVAEAYYASREALGFPGCKK.

The protein belongs to the class-II aminoacyl-tRNA synthetase family. As to quaternary structure, tetramer of two alpha and two beta subunits.

The protein localises to the cytoplasm. It carries out the reaction tRNA(Gly) + glycine + ATP = glycyl-tRNA(Gly) + AMP + diphosphate. This chain is Glycine--tRNA ligase alpha subunit, found in Haemophilus influenzae (strain 86-028NP).